The primary structure comprises 254 residues: Phosphatidylglycerol--prolipoprotein diacylglyceryl transferase (254 aa).

The next 3 helical transmembrane spans lie at 11-31 (LAIR…LLLA), 49-69 (FLIA…IFEF), and 84-104 (QGGL…YIYL). Arg130 contacts a 1,2-diacyl-sn-glycero-3-phospho-(1'-sn-glycerol). The next 3 helical transmembrane spans lie at 169–189 (PTFL…VYLL), 196–216 (GIVF…IEGL), and 228–248 (VAQL…YNII).

The protein belongs to the Lgt family.

It localises to the cell membrane. It carries out the reaction L-cysteinyl-[prolipoprotein] + a 1,2-diacyl-sn-glycero-3-phospho-(1'-sn-glycerol) = an S-1,2-diacyl-sn-glyceryl-L-cysteinyl-[prolipoprotein] + sn-glycerol 1-phosphate + H(+). The protein operates within protein modification; lipoprotein biosynthesis (diacylglyceryl transfer). Functionally, catalyzes the transfer of the diacylglyceryl group from phosphatidylglycerol to the sulfhydryl group of the N-terminal cysteine of a prolipoprotein, the first step in the formation of mature lipoproteins. This Clostridium botulinum (strain Loch Maree / Type A3) protein is Phosphatidylglycerol--prolipoprotein diacylglyceryl transferase.